The sequence spans 424 residues: MSPNSKGVEILSIGTELLLGNIINTNAQWISEQLSQLGLNHFRQSTVGDNCDRIVRVIQEISKRSNLLITTGGLGPTPDDLTTEAIAKSFNVTLFERPHLWDEIKQKLPNSKLHEDSSSLRKQCFFPKNAQIINNPRGTAPGMIWEPIKGFTILTFPGVPSEMKTMWEETAYDFIQTKFSDTYSFFSNTLKFAGIGESSVAEKINDLLNLKNPTVAPYANLGEVKLRITARAKNEVEAKNIIKPIKEKLKQEFSKFIFGEDNDTLPSILIKELTKRKQTIVFAESCTGGLLSASLTSISGSSQVFQGSIVSYSNELKHLLLDISEEKLAKYGAVSEEVCEAMAINVKKKLRADWAISISGIAGPNGGSQNKPVGLVYISISGPNNYITTIKKQFNSTRNRLEIQTLSVNVCLNSLRLILLSDSK.

The protein belongs to the CinA family.

This is CinA-like protein from Prochlorococcus marinus (strain MIT 9301).